Consider the following 298-residue polypeptide: Probable pyridoxal 5'-phosphate synthase subunit SNZ3 (298 aa).

Asp-21 serves as a coordination point for D-ribose 5-phosphate. Lys-78 functions as the Schiff-base intermediate with D-ribose 5-phosphate in the catalytic mechanism. D-ribose 5-phosphate is bound by residues Gly-150, Gly-213, and 234–235; that span reads GS.

The protein belongs to the PdxS/SNZ family. As to quaternary structure, homohexamer. Interacts with THI11.

The enzyme catalyses aldehydo-D-ribose 5-phosphate + D-glyceraldehyde 3-phosphate + L-glutamine = pyridoxal 5'-phosphate + L-glutamate + phosphate + 3 H2O + H(+). It functions in the pathway cofactor biosynthesis; pyridoxal 5'-phosphate biosynthesis. Functionally, catalyzes the formation of pyridoxal 5'-phosphate from ribose 5-phosphate (RBP), glyceraldehyde 3-phosphate (G3P) and ammonia. The ammonia is provided by a SNO isoform. Can also use ribulose 5-phosphate and dihydroxyacetone phosphate as substrates, resulting from enzyme-catalyzed isomerization of RBP and G3P, respectively. The polypeptide is Probable pyridoxal 5'-phosphate synthase subunit SNZ3 (SNZ3) (Saccharomyces cerevisiae (strain ATCC 204508 / S288c) (Baker's yeast)).